Reading from the N-terminus, the 529-residue chain is MAPEMDQFYRSTMAIYKSILEQFNPALENLVYLGNNYLRAFHALSEAAEVYFNAIQKIGEQALQSSTSQILGEILVQMSDTQRHLNSDLEVVVQTFHGDLLQHMEKNTKLDMQFIKDSRQHYEMEYRHRAANLEKSMSQLWRMERKRDKNAREMKESVNRLHAQMQAFVSESQRAAELEEKRRYRFLAEKHLLLSNTFLQFFGRARGMLQNRVLLWKEQSEASRSPSRAHSPGLLGPVLGPPYPSGRLTPTRLDMPQRALGEFGSPRSRHGSGSYGPEPAEARSASQLEPDHRRSLPRTPSASSLYSSSTQRSRSNSFGERPGGGGGGGGARRVRALVSHSEGANHTLLRFSAGDVVEVLVPEAQNGWLYGKLEGSSSSGWFPEAYVKPLDELPVNPMNPLNPVTSMNPRSPVNELPSRLRSYPLRGSHSLDDLLDRPGNSTASSDYWDGQSRSRTPSHIPSRTPSPAPTPLPSSRRSSMGSMGVASDVKKLASWEQQPPELFPRGTNPFATVKLRPTVTNDRSAPLIR.

The IMD domain maps to 1–239 (MAPEMDQFYR…HSPGLLGPVL (239 aa)). Disordered regions lie at residues 221 to 332 (EASR…GGAR) and 399 to 529 (NPLN…PLIR). 3 positions are modified to phosphoserine: Ser231, Ser272, and Ser304. A compositionally biased stretch (low complexity) spans 301 to 317 (SASSLYSSSTQRSRSNS). Over residues 321 to 331 (RPGGGGGGGGA) the composition is skewed to gly residues. The SH3 domain occupies 329–392 (GGARRVRALV…PEAYVKPLDE (64 aa)). The segment covering 439–459 (GNSTASSDYWDGQSRSRTPSH) has biased composition (polar residues). The segment covering 473–484 (PSSRRSSMGSMG) has biased composition (low complexity). A phosphoserine mark is found at Ser479 and Ser482.

It is found in the cell membrane. The protein localises to the cell junction. It localises to the cytoplasmic vesicle membrane. Functionally, phosphoinositides-binding protein that induces the formation of planar or gently curved membrane structures. Binds to phosphoinositides, including to phosphatidylinositol 4,5-bisphosphate (PtdIns(4,5)P2) headgroups. There seems to be no clear preference for a specific phosphoinositide. In Bos taurus (Bovine), this protein is BAR/IMD domain-containing adapter protein 2-like 2 (BAIAP2L2).